The primary structure comprises 215 residues: MSKLADLRQEYARAELSRDHVTDDPIEQFRAWFDEAEDAELEEPNAMTLATAATDGTPSARIVLLKGLDDRGFHFYTNYESRKGTDLSQNPHAALVFLWKPLERQVRIEGTVERLPAEESTEYFHRRPRGAQMGAWASPQSRVVDSRADLEENLDTVKAEYGDEDEIPRPSHWGGYVVRPTEVEFWQGRPNRLHDRLRYRRSDPAGDWTLERLAP.

Substrate is bound by residues 8-11 (RQEY) and lysine 66. FMN is bound by residues 61 to 66 (RIVLLK), 76 to 77 (YT), arginine 82, lysine 83, and glutamine 105. Substrate is bound by residues tyrosine 123 and arginine 127. FMN contacts are provided by residues 140–141 (QS) and tryptophan 186. Residue 192-194 (RLH) participates in substrate binding. Arginine 196 contributes to the FMN binding site.

It belongs to the pyridoxamine 5'-phosphate oxidase family. Homodimer. It depends on FMN as a cofactor.

The enzyme catalyses pyridoxamine 5'-phosphate + O2 + H2O = pyridoxal 5'-phosphate + H2O2 + NH4(+). It catalyses the reaction pyridoxine 5'-phosphate + O2 = pyridoxal 5'-phosphate + H2O2. It functions in the pathway cofactor metabolism; pyridoxal 5'-phosphate salvage; pyridoxal 5'-phosphate from pyridoxamine 5'-phosphate: step 1/1. It participates in cofactor metabolism; pyridoxal 5'-phosphate salvage; pyridoxal 5'-phosphate from pyridoxine 5'-phosphate: step 1/1. In terms of biological role, catalyzes the oxidation of either pyridoxine 5'-phosphate (PNP) or pyridoxamine 5'-phosphate (PMP) into pyridoxal 5'-phosphate (PLP). The polypeptide is Pyridoxine/pyridoxamine 5'-phosphate oxidase (Salinibacter ruber (strain DSM 13855 / M31)).